Consider the following 317-residue polypeptide: Methyltransferase CPUR_05424 (317 aa).

A methyltransferase domain region spans residues 57–149; the sequence is DVGAGNGPYA…QLRPGGTFAC (93 aa).

Belongs to the methyltransferase superfamily.

The protein operates within pigment biosynthesis. Methyltransferase; part of the ergochrome gene cluster responsible for the typical purple-black color of the ergot sclerotia. The ergochrome gene cluster produces several ergot pigments including the yellow ergochrome secalonic acid and its derivatives, as well as the red anthraquinones endocrocin and clavorubin. The pathway begins with the synthesis of atrochrysone thioester by the polyketide synthase (PKS) CPUR_05437. The atrochrysone carboxyl ACP thioesterase CPUR_05436 then breaks the thioester bond and releases the atrochrysone carboxylic acid from CPUR_05437. The atrochrysone carboxylic acid is then converted to atrochrysone which is further transformed into emodin anthrone. The next step is performed by the anthrone oxygenase CPUR_05434 that catalyzes the oxidation of emodinanthrone to emodin. Emodin is further modified to yield monodictyphenone via several steps involving CPUR_05427, CPUR_05428, CPUR_05429 and CPUR_05430. The short chain dehydrogenase/reductase CPUR_05418 then catalyzes the C-5 ketoreduction to give the xanthone skeleton of the monomeric units. Ergochromes formation requires further dimerization steps of different xanthone units, probably catalyzed by the cytochrome P450 monooxygenase CPUR_05419. CPUR_05425, CPUR_05426 and CPUR_05431 are unique to Claviceps, thus it is likely that they are involved in further modification of xanthone units or in their dimerization. The yellow ergochromes and the red anthraquinone pigments endocrocin and clavorubin are products from the same PKS derived precursors and the latter are likely shunt products in the pathway of xanthone biosynthesis. It is proposed that atrochrysone carboxylic acid released from the PKS CPUR_05437 can also be converted to endocrocin anthrone which is further oxidized into endocrocin by CPUR_05435. Endocrocin could be then modified to clavorubin, possibly by CPUR_05423 and CPUR_05431. Clavorubin is the principal anthraquinone metabolite produced by the cluster with a much higher yield compared to endocrocin. This Claviceps purpurea (strain 20.1) (Ergot fungus) protein is Methyltransferase CPUR_05424.